A 325-amino-acid chain; its full sequence is Elongation factor P--(R)-beta-lysine ligase (325 aa).

76–78 (SPE) lines the substrate pocket. ATP-binding positions include 100–102 (RNE) and asparagine 109. Tyrosine 118 contributes to the substrate binding site. ATP is bound at residue 244 to 245 (EL). Glutamate 251 contacts substrate. Glycine 300 contributes to the ATP binding site.

It belongs to the class-II aminoacyl-tRNA synthetase family. EpmA subfamily. In terms of assembly, homodimer.

The enzyme catalyses D-beta-lysine + L-lysyl-[protein] + ATP = N(6)-((3R)-3,6-diaminohexanoyl)-L-lysyl-[protein] + AMP + diphosphate + H(+). Functionally, with EpmB is involved in the beta-lysylation step of the post-translational modification of translation elongation factor P (EF-P) on 'Lys-34'. Catalyzes the ATP-dependent activation of (R)-beta-lysine produced by EpmB, forming a lysyl-adenylate, from which the beta-lysyl moiety is then transferred to the epsilon-amino group of EF-P 'Lys-34'. This chain is Elongation factor P--(R)-beta-lysine ligase, found in Salmonella arizonae (strain ATCC BAA-731 / CDC346-86 / RSK2980).